We begin with the raw amino-acid sequence, 1240 residues long: MAYRNVKYGKKVERRNYSKIIYDVDLPNLIEIQNKSFNWFLKDGIEELLQDFCPIESYNGDLKIYFGECYSTGPKYSVEESKTKDASYVIQLFVKATLENTLTGETKKSSVLLTELPLITDTGTFIINGKERVAVSQIVRSSSVYYSSTFDVKLNKNLYSGQVIPARGAWIEYEEGSKEILYVKLDRSKKIPLSNFIYALGFNNREIIEKVFGKSPLLNSSFVKEEDMDTGNALIELYSKIRQGEKVPVDTARDFIRKRLFDQKKYDLTTVGRYKFNKKLDVLARAEKTYLVHDFVNLETKEIILPKHTFLTKDKIEILRKNRHFLLQELFDAQHNLENETDEEILTYKKDPQSRELYIKTNILNFRTGEIIFPKDTLVTDEVIKRLRKSIQLLDGKVIEFFLRSKDVYQKDLERTGVFNEILEVYLSKDEHDNLQHKVQIVGNNQKETKKHITLSDIIASISYYLNLYEGIGNVDDIDHLGNRRLRLIGELLKNQFRIGLTRAEKHIKDMISVSKFSEVGPGELVNFGFLNGVIKTFFANSRLSQFMDQINPLAELTQKRRVSALGVGGINRDRAGVEVRDVHNSHYGRLCPIETPEGPSIGLIASLAIYAKVDDYGFIQTPFFKVFVQNGASYVSNQIEYLTADQEKEEIIASSGYELNSDATFQKDKVIARKNGEIGIYPKEQVTYADISPKQIVSIATASIPFLEHNDSSRALMGSNMQRQAVPLLVTESPIVGTGIEYRAAKDSGSLIIASQPGIVTYVDAKKIVTSDQEGNKKEYQLTTFEKSNQDTLILQKPIVSLGDNIQKGDILVDGPSTNQGELALGRNILVAFMTWEGYNYEDAIIISEELVKNDVYTSVHINKYSVQTRELKKGSGKEEITREVPNVGADAIKNLDERGIIIPGSEVKEGDILVGKITPQGNVDPTPQEKLIQIVIGEKAREYKDSSLRVPYGEGGIVQSVQYFSRKNGDILPPGVNENIRVFIAKKRKISEGDKMAGRHGNKGVISRILPKEDLPFMEDGTTIDVMLNPLGVPSRMNIGQILEIHLGMSAKNLNIKVATPVFDGVNDQDLKEISQEANLELDGKKVLYDGRTGEPYENRISVGVMYMIKLSHMVDDKLHARNVGPYTLVTQQPMRGKIREGGQRYGEMENWAVHAHGAAYTLQEFLTIKSDDIIGRNQTYSAIVQGKQLPKPNIPESFRVLIKELQALGLYVELIKTDTKENEVNKSLIDYKKEGYN.

It belongs to the RNA polymerase beta chain family. The RNAP catalytic core consists of 2 alpha, 1 beta, 1 beta' and 1 omega subunit. When a sigma factor is associated with the core the holoenzyme is formed, which can initiate transcription.

It carries out the reaction RNA(n) + a ribonucleoside 5'-triphosphate = RNA(n+1) + diphosphate. Functionally, DNA-dependent RNA polymerase catalyzes the transcription of DNA into RNA using the four ribonucleoside triphosphates as substrates. In Phytoplasma australiense, this protein is DNA-directed RNA polymerase subunit beta.